The sequence spans 319 residues: tRNA uridine(34) hydroxylase (319 aa).

The 95-residue stretch at 125 to 219 (LDENTVVIDA…YGKDPEVQGD (95 aa)) folds into the Rhodanese domain. Cys-179 serves as the catalytic Cysteine persulfide intermediate.

This sequence belongs to the TrhO family.

The enzyme catalyses uridine(34) in tRNA + AH2 + O2 = 5-hydroxyuridine(34) in tRNA + A + H2O. Its function is as follows. Catalyzes oxygen-dependent 5-hydroxyuridine (ho5U) modification at position 34 in tRNAs. This chain is tRNA uridine(34) hydroxylase, found in Lactococcus lactis subsp. lactis (strain IL1403) (Streptococcus lactis).